The following is a 394-amino-acid chain: MPPKKQVEEKKVLLGRPGNNLKAGIVGLANVGKSTFFQAITRCPLGNPANYPFATIDPEEARVIVPSPRFDKLCEIYKKTASEVPAHLTVYDIAGLTKGASAGEGLGNAFLSHIRSVDSIYQVVRCFDDAEIIHVEGDVDPVRDLEIINQELRLKDIEFAQKALEGAEKIAKRGGQSLEVKQKKEEMDLITKIIKLLESGQRVANHSWTSKEVEIINSMFLLTAKPCIYLINLSERDYIRKKNKHLLRIKEWVDKYSPGDLIIPFSVSLEERLSHMSPEDAEEELKKLQTISALPKIITTMRQKLDLISFFTCGPDEVREWTIRRGTKAPQAAGVIHNDLMNTFILAQVMKCEDVFEYKDDSAIKAAGKLMQKGKDYVVEDGDIIYFRAGAGKN.

The OBG-type G domain occupies 21–285 (LKAGIVGLAN…MSPEDAEEEL (265 aa)). 30-35 (NVGKST) lines the ATP pocket. Mg(2+) is bound by residues Ser-34 and Thr-55. Thr-89 bears the Phosphothreonine mark. Lys-98 participates in a covalent cross-link: Glycyl lysine isopeptide (Lys-Gly) (interchain with G-Cter in ubiquitin). Ser-116 and Ser-119 each carry phosphoserine. Position 233 (Leu-233) interacts with ATP. The 84-residue stretch at 306 to 389 (DLISFFTCGP…EDGDIIYFRA (84 aa)) folds into the TGS domain.

Belongs to the TRAFAC class OBG-HflX-like GTPase superfamily. OBG GTPase family. YchF/OLA1 subfamily. Monomer. Interacts with the 26S proteasome subunit RPT6. The cofactor is Mg(2+).

The protein resides in the cytoplasm. Hydrolyzes ATP, and can also hydrolyze GTP with lower efficiency. Has lower affinity for GTP. This Saccharomyces cerevisiae (strain ATCC 204508 / S288c) (Baker's yeast) protein is Obg-like ATPase 1.